The primary structure comprises 230 residues: MSSPTTPVPVISWTADEAIKFLKEWNFSLGIIVLFITIILQFGYTSRSMFVYVIKMVILWLMWPLTIILTIFNCVYALNNVYLGFSIVFTIVAIIMWVVYFVNSIRLFIRTGSWWSFNPETNNLMCIDMKGRMYVRPIIEDYHTLTATIIRGHLYIQGIKLGTGYSLSDLPAYVTVAKVTHLCTYKRGFLDRIGDTSGFAVYVKSKVGNYRLPSTHKGSGMDTALLRNNI.

At methionine 1 to glutamate 24 the chain is on the virion surface side. A helical transmembrane segment spans residues tryptophan 25–threonine 45. At serine 46–lysine 55 the chain is on the intravirion side. The helical transmembrane segment at methionine 56–tyrosine 76 threads the bilayer. At alanine 77 to glycine 84 the chain is on the virion surface side. A helical membrane pass occupies residues phenylalanine 85–isoleucine 105. Residues arginine 106–asparagine 228 lie on the Intravirion side of the membrane.

Belongs to the betacoronaviruses M protein family. As to quaternary structure, homomultimer. Interacts with envelope E protein in the budding compartment of the host cell, which is located between endoplasmic reticulum and the Golgi complex. Forms a complex with HE and S proteins. Interacts with nucleocapsid N protein. This interaction probably participates in RNA packaging into the virus.

It is found in the virion membrane. Its subcellular location is the host Golgi apparatus membrane. Component of the viral envelope that plays a central role in virus morphogenesis and assembly via its interactions with other viral proteins. The sequence is that of Membrane protein from Porcine hemagglutinating encephalomyelitis virus (strain 67N) (HEV-67N).